The following is a 238-amino-acid chain: Protein G1-like8 (238 aa).

Disordered stretches follow at residues 1–33 (MEGG…RYES) and 147–238 (KARG…ATRV). Residues 10-27 (GQAQPVAQAPPAMQPMQQ) are compositionally biased toward low complexity. The ALOG domain maps to 30 to 157 (RYESQKRRDW…ARGIPYEKKK (128 aa)). The short motif at 155–159 (KKKRK) is the Nuclear localization signal element. The segment covering 165 to 176 (QPPPPPPPPPQH) has biased composition (pro residues). 2 stretches are compositionally biased toward low complexity: residues 177–213 (QPGA…ATSQ) and 222–238 (TTTT…ATRV).

The protein belongs to the plant homeotic and developmental regulators ALOG protein family.

It localises to the nucleus. Its function is as follows. Probable transcription regulator that acts as a developmental regulator by promoting cell growth in response to light. The protein is Protein G1-like8 (G1L8) of Oryza sativa subsp. japonica (Rice).